The primary structure comprises 426 residues: MVLSVPVIALGATLGTATSILALCGVTCLCRHMHPKKGLLPRDQDPDLEKAKPSLLGSAQQFNVKKSTEPVQPRALLKFPDIYGPRPAVTAPEVINYADYSLRSTEEPTAPASPQPPNDSRLKRQVTEELFILPQNGVVEDVCVMETWNPEKAASWNQAPKLHYCLDYDCQKAELFVTRLEAVTSNHDGGCDCYVQGSVANRTGSVEAQTALKKRQLHTTWEEGLVLPLAEEELPTATLTLTLRTCDRFSRHSVAGELRLGLDGTSVPLGAAQWGELKTSAKEPSAGAGEVLLSISYLPAANRLLVVLIKAKNLHSNQSKELLGKDVSVKVTLKHQARKLKKKQTKRAKHKINPVWNEMIMFELPDDLLQASSVELEVLGQDDSGQSCALGHCSLGLHTSGSERSHWEEMLKNPRRQIAMWHQLHL.

Topologically, residues 1–6 (MVLSVP) are vesicular. A helical membrane pass occupies residues 7–29 (VIALGATLGTATSILALCGVTCL). Over 30–426 (CRHMHPKKGL…QIAMWHQLHL (397 aa)) the chain is Cytoplasmic. 2 consecutive C2 domains span residues 158-275 (QAPK…AQWG) and 287-422 (GAGE…AMWH).

Belongs to the synaptotagmin family. In terms of assembly, interacts with NRXN1. As to expression, expressed in brain, pancreas and kidney.

Its subcellular location is the membrane. Functionally, may be involved in transport vesicle docking to the plasma membrane. The protein is Synaptotagmin-13 (SYT13) of Homo sapiens (Human).